A 339-amino-acid polypeptide reads, in one-letter code: UDP-3-O-acylglucosamine N-acyltransferase (339 aa).

His239 functions as the Proton acceptor in the catalytic mechanism.

It belongs to the transferase hexapeptide repeat family. LpxD subfamily. In terms of assembly, homotrimer.

It carries out the reaction a UDP-3-O-[(3R)-3-hydroxyacyl]-alpha-D-glucosamine + a (3R)-hydroxyacyl-[ACP] = a UDP-2-N,3-O-bis[(3R)-3-hydroxyacyl]-alpha-D-glucosamine + holo-[ACP] + H(+). It participates in bacterial outer membrane biogenesis; LPS lipid A biosynthesis. Its function is as follows. Catalyzes the N-acylation of UDP-3-O-acylglucosamine using 3-hydroxyacyl-ACP as the acyl donor. Is involved in the biosynthesis of lipid A, a phosphorylated glycolipid that anchors the lipopolysaccharide to the outer membrane of the cell. In Aliivibrio fischeri (strain ATCC 700601 / ES114) (Vibrio fischeri), this protein is UDP-3-O-acylglucosamine N-acyltransferase.